Here is a 241-residue protein sequence, read N- to C-terminus: Purine nucleoside phosphorylase DeoD-type 1 (241 aa).

H5 is an a purine D-ribonucleoside binding site. Phosphate is bound by residues G21, R25, R44, and 88–91 (RVGS). Residues 180-182 (EME) and 204-205 (SD) contribute to the a purine D-ribonucleoside site. D205 functions as the Proton donor in the catalytic mechanism.

This sequence belongs to the PNP/UDP phosphorylase family. In terms of assembly, homohexamer; trimer of homodimers.

It catalyses the reaction a purine D-ribonucleoside + phosphate = a purine nucleobase + alpha-D-ribose 1-phosphate. It carries out the reaction a purine 2'-deoxy-D-ribonucleoside + phosphate = a purine nucleobase + 2-deoxy-alpha-D-ribose 1-phosphate. Its function is as follows. Catalyzes the reversible phosphorolytic breakdown of the N-glycosidic bond in the beta-(deoxy)ribonucleoside molecules, with the formation of the corresponding free purine bases and pentose-1-phosphate. This Photobacterium profundum (strain SS9) protein is Purine nucleoside phosphorylase DeoD-type 1.